The chain runs to 253 residues: Imidazole glycerol phosphate synthase subunit HisF (253 aa).

Catalysis depends on residues D11 and D130.

Belongs to the HisA/HisF family. In terms of assembly, heterodimer of HisH and HisF.

It is found in the cytoplasm. The catalysed reaction is 5-[(5-phospho-1-deoxy-D-ribulos-1-ylimino)methylamino]-1-(5-phospho-beta-D-ribosyl)imidazole-4-carboxamide + L-glutamine = D-erythro-1-(imidazol-4-yl)glycerol 3-phosphate + 5-amino-1-(5-phospho-beta-D-ribosyl)imidazole-4-carboxamide + L-glutamate + H(+). It participates in amino-acid biosynthesis; L-histidine biosynthesis; L-histidine from 5-phospho-alpha-D-ribose 1-diphosphate: step 5/9. Its function is as follows. IGPS catalyzes the conversion of PRFAR and glutamine to IGP, AICAR and glutamate. The HisF subunit catalyzes the cyclization activity that produces IGP and AICAR from PRFAR using the ammonia provided by the HisH subunit. The polypeptide is Imidazole glycerol phosphate synthase subunit HisF (Geotalea uraniireducens (strain Rf4) (Geobacter uraniireducens)).